We begin with the raw amino-acid sequence, 1275 residues long: Serine/threonine-protein kinase ULK4 (1275 aa).

One can recognise a Protein kinase domain in the interval 4 to 280 (FILYEEIGRG…WTRLLQHSFW (277 aa)). D121 acts as the Proton acceptor in catalysis. Disordered stretches follow at residues 299–346 (SRNT…EFRP) and 359–393 (FLLSSRPTPRTSTAVEVSPGEDRTHCSPQKTSPLT). Basic and acidic residues predominate over residues 336–346 (FRLENPTEFRP). Composition is skewed to polar residues over residues 363 to 373 (SRPTPRTSTAV) and 384 to 393 (CSPQKTSPLT). HEAT repeat units lie at residues 727 to 765 (LIQEKDFVSTIIRLLESPSTYIRAKAFLVLLYILIYNRE), 842 to 880 (LKMCLPLMPIVLHLVTSQVFRPQVVTEEFLFSYGTILSH), 926 to 964 (STVVDYILPPLVSLVQSQNVEWRLFSLRLLSETTSLLVN), 1025 to 1063 (LVEESKLIPLIFEVTLEHQESILGNTMQSVIALLNNLVA), 1151 to 1189 (NRPLTDLISLLIPLLPNEDPEIFDVSSKCLSILVQLYGG), and 1213 to 1253 (PKEQ…LAPG).

The protein belongs to the protein kinase superfamily. Ser/Thr protein kinase family. APG1/unc-51/ULK1 subfamily.

It catalyses the reaction L-seryl-[protein] + ATP = O-phospho-L-seryl-[protein] + ADP + H(+). It carries out the reaction L-threonyl-[protein] + ATP = O-phospho-L-threonyl-[protein] + ADP + H(+). Functionally, may be involved in the remodeling of cytoskeletal components, such as alpha-tubulin, and in this way regulates neurite branching and elongation, as well as cell motility. The sequence is that of Serine/threonine-protein kinase ULK4 (ULK4) from Pongo abelii (Sumatran orangutan).